A 195-amino-acid chain; its full sequence is Probable GTP-binding protein EngB (195 aa).

The 172-residue stretch at 24-195 (DWPEIALAGR…EAWEAILRYL (172 aa)) folds into the EngB-type G domain. GTP contacts are provided by residues 32–39 (GRSNVGKS), 59–63 (GKTQL), 77–80 (DVPG), 144–147 (TKAD), and 176–178 (FSS). The Mg(2+) site is built by Ser-39 and Thr-61.

The protein belongs to the TRAFAC class TrmE-Era-EngA-EngB-Septin-like GTPase superfamily. EngB GTPase family. The cofactor is Mg(2+).

Its function is as follows. Necessary for normal cell division and for the maintenance of normal septation. This chain is Probable GTP-binding protein EngB, found in Lactococcus lactis subsp. lactis (strain IL1403) (Streptococcus lactis).